The primary structure comprises 274 residues: Large ribosomal subunit protein uL2cy (274 aa).

2 disordered regions span residues 1–20 (MAIHLYKTSTPSTRNGAVDS) and 224–274 (NPVD…RRSK).

It belongs to the universal ribosomal protein uL2 family. In terms of assembly, part of the 50S ribosomal subunit.

It is found in the plastid. The protein resides in the chloroplast. This chain is Large ribosomal subunit protein uL2cy (rpl2-B), found in Populus alba (White poplar).